Consider the following 165-residue polypeptide: S-ribosylhomocysteine lyase (165 aa).

H54, H58, and C128 together coordinate Fe cation.

The protein belongs to the LuxS family. As to quaternary structure, homodimer. Fe cation serves as cofactor.

The enzyme catalyses S-(5-deoxy-D-ribos-5-yl)-L-homocysteine = (S)-4,5-dihydroxypentane-2,3-dione + L-homocysteine. In terms of biological role, involved in the synthesis of autoinducer 2 (AI-2) which is secreted by bacteria and is used to communicate both the cell density and the metabolic potential of the environment. The regulation of gene expression in response to changes in cell density is called quorum sensing. Catalyzes the transformation of S-ribosylhomocysteine (RHC) to homocysteine (HC) and 4,5-dihydroxy-2,3-pentadione (DPD). In Helicobacter hepaticus (strain ATCC 51449 / 3B1), this protein is S-ribosylhomocysteine lyase.